Reading from the N-terminus, the 102-residue chain is NADH-quinone oxidoreductase subunit K 1 (102 aa).

The next 3 helical transmembrane spans lie at 5–25, 30–50, and 62–82; these read LLHV…CVLV, IIMM…AFVG, and VFAL…LALV.

Belongs to the complex I subunit 4L family. In terms of assembly, NDH-1 is composed of 14 different subunits. Subunits NuoA, H, J, K, L, M, N constitute the membrane sector of the complex.

The protein resides in the cell inner membrane. The enzyme catalyses a quinone + NADH + 5 H(+)(in) = a quinol + NAD(+) + 4 H(+)(out). Its function is as follows. NDH-1 shuttles electrons from NADH, via FMN and iron-sulfur (Fe-S) centers, to quinones in the respiratory chain. The immediate electron acceptor for the enzyme in this species is believed to be ubiquinone. Couples the redox reaction to proton translocation (for every two electrons transferred, four hydrogen ions are translocated across the cytoplasmic membrane), and thus conserves the redox energy in a proton gradient. The polypeptide is NADH-quinone oxidoreductase subunit K 1 (Geotalea uraniireducens (strain Rf4) (Geobacter uraniireducens)).